The primary structure comprises 251 residues: Phosphate import ATP-binding protein PstB 2 (251 aa).

Residues 5–246 form the ABC transporter domain; sequence LTTENLSLFY…PVKQETNDYI (242 aa). 37 to 44 contributes to the ATP binding site; it reads GPSGCGKS.

This sequence belongs to the ABC transporter superfamily. Phosphate importer (TC 3.A.1.7) family. As to quaternary structure, the complex is composed of two ATP-binding proteins (PstB), two transmembrane proteins (PstC and PstA) and a solute-binding protein (PstS).

The protein localises to the cell membrane. The catalysed reaction is phosphate(out) + ATP + H2O = ADP + 2 phosphate(in) + H(+). Part of the ABC transporter complex PstSACB involved in phosphate import. Responsible for energy coupling to the transport system. The protein is Phosphate import ATP-binding protein PstB 2 of Lactiplantibacillus plantarum (strain ATCC BAA-793 / NCIMB 8826 / WCFS1) (Lactobacillus plantarum).